The following is a 631-amino-acid chain: tRNA uridine 5-carboxymethylaminomethyl modification enzyme MnmG (631 aa).

Residue 15-20 (GAGHAG) participates in FAD binding. A disordered region spans residues 203–232 (TPPRVDGNTVDYSKTQEEPGDKEPRHFSYT). Positions 216–232 (KTQEEPGDKEPRHFSYT) are enriched in basic and acidic residues. 276 to 290 (GPRYCPSIEDKVVRF) provides a ligand contact to NAD(+).

The protein belongs to the MnmG family. Homodimer. Heterotetramer of two MnmE and two MnmG subunits. It depends on FAD as a cofactor.

Its subcellular location is the cytoplasm. In terms of biological role, NAD-binding protein involved in the addition of a carboxymethylaminomethyl (cmnm) group at the wobble position (U34) of certain tRNAs, forming tRNA-cmnm(5)s(2)U34. This Lactobacillus gasseri (strain ATCC 33323 / DSM 20243 / BCRC 14619 / CIP 102991 / JCM 1131 / KCTC 3163 / NCIMB 11718 / NCTC 13722 / AM63) protein is tRNA uridine 5-carboxymethylaminomethyl modification enzyme MnmG.